The following is a 98-amino-acid chain: NADH-ubiquinone oxidoreductase chain 4L (98 aa).

The next 3 helical transmembrane spans lie at 1–21, 36–56, and 61–81; these read MVLI…GVLI, MMLS…MFSI, and LILL…LVTI.

Belongs to the complex I subunit 4L family. In terms of assembly, core subunit of respiratory chain NADH dehydrogenase (Complex I) which is composed of 45 different subunits.

It localises to the mitochondrion inner membrane. The catalysed reaction is a ubiquinone + NADH + 5 H(+)(in) = a ubiquinol + NAD(+) + 4 H(+)(out). In terms of biological role, core subunit of the mitochondrial membrane respiratory chain NADH dehydrogenase (Complex I) which catalyzes electron transfer from NADH through the respiratory chain, using ubiquinone as an electron acceptor. Part of the enzyme membrane arm which is embedded in the lipid bilayer and involved in proton translocation. This Metachirus nudicaudatus (Brown four-eyed opossum) protein is NADH-ubiquinone oxidoreductase chain 4L (MT-ND4L).